Here is a 234-residue protein sequence, read N- to C-terminus: Large ribosomal subunit protein uL1 (234 aa).

The protein belongs to the universal ribosomal protein uL1 family. In terms of assembly, part of the 50S ribosomal subunit.

Binds directly to 23S rRNA. The L1 stalk is quite mobile in the ribosome, and is involved in E site tRNA release. Functionally, protein L1 is also a translational repressor protein, it controls the translation of the L11 operon by binding to its mRNA. This is Large ribosomal subunit protein uL1 from Klebsiella pneumoniae (strain 342).